The sequence spans 356 residues: L-Ala-D/L-Glu epimerase (356 aa).

Residue 161–163 (KVK) participates in substrate binding. Mg(2+) contacts are provided by aspartate 191, glutamate 219, and aspartate 244. Substrate contacts are provided by residues lysine 268 and 320–322 (DLD).

The protein belongs to the mandelate racemase/muconate lactonizing enzyme family. The cofactor is Mg(2+).

It carries out the reaction L-alanyl-L-glutamate = L-alanyl-D-glutamate. In terms of biological role, dipeptide epimerase with a preference for substrates containing a Glu residue in the second position. Catalyzes the epimerization of L-Ala-L-Glu, L-Ser-L-Glu, L-Thr-L-Glu, L-Val-L-Glu, L-Gly-L-Glu and L-Thr-L-Glu (in vitro). May play a role in the metabolism of the murein peptide, of which L-Ala-D-Glu is a component. The polypeptide is L-Ala-D/L-Glu epimerase (Francisella tularensis subsp. novicida (strain U112)).